Reading from the N-terminus, the 331-residue chain is Ribose-phosphate pyrophosphokinase (331 aa).

55–57 (DGE) provides a ligand contact to ATP. His148 and Asp187 together coordinate Mg(2+). Residue Lys211 is part of the active site. Residues Arg213, Asp237, and 241–245 (DTGGT) each bind D-ribose 5-phosphate.

The protein belongs to the ribose-phosphate pyrophosphokinase family. Class I subfamily. Homohexamer. The cofactor is Mg(2+).

The protein resides in the cytoplasm. It catalyses the reaction D-ribose 5-phosphate + ATP = 5-phospho-alpha-D-ribose 1-diphosphate + AMP + H(+). It functions in the pathway metabolic intermediate biosynthesis; 5-phospho-alpha-D-ribose 1-diphosphate biosynthesis; 5-phospho-alpha-D-ribose 1-diphosphate from D-ribose 5-phosphate (route I): step 1/1. Functionally, involved in the biosynthesis of the central metabolite phospho-alpha-D-ribosyl-1-pyrophosphate (PRPP) via the transfer of pyrophosphoryl group from ATP to 1-hydroxyl of ribose-5-phosphate (Rib-5-P). The polypeptide is Ribose-phosphate pyrophosphokinase (Parasynechococcus marenigrum (strain WH8102)).